Here is a 678-residue protein sequence, read N- to C-terminus: MPTWGARPASPDRFAVSAEAENKVREQQPHVERIFSVGVSVLPKDCPDNPHIWLQLEGPKENASRAKEYLKGLCSPELQDEIHYPPKLHCIFLGAQGFFLDCLAWSTSAHLVPRAPGSLMISGLTEAFVMAQSRVEELAERLSWDFTPGPSSGASQCTGVLRDFSALLQSPGDAHREALLQLPLAVQEELLSLVQEASSGQGPGALASWEGRSSALLGAQCQGVRAPPSDGRESLDTGSMGPGDCRGARGDTYAVEKEGGKQGGPREMDWGWKELPGEEAWEREVALRPQSVGGGARESAPLKGKALGKEEIALGGGGFCVHREPPGAHGSCHRAAQSRGASLLQRLHNGNASPPRVPSPPPAPEPPWHCGDRGDCGDRGDVGDRGDKQQGMARGRGPQWKRGARGGNLVTGTQRFKEALQDPFTLCLANVPGQPDLRHIVIDGSNVAMVHGLQHYFSSRGIAIAVQYFWDRGHRDITVFVPQWRFSKDAKVRESHFLQKLYSLSLLSLTPSRVMDGKRISSYDDRFMVKLAEETDGIIVSNDQFRDLAEESEKWMAIIRERLLPFTFVGNLFMVPDDPLGRNGPTLDEFLKKPARTQGSSKAQHPSRGFAEHGKQQQGREEEKGSGGIRKTRETERLRRQLLEVFWGQDHKVDFILQREPYCRDINQLSEALLSLNF.

A Phosphoserine modification is found at serine 10. Disordered stretches follow at residues 222-251 (QGVR…ARGD) and 347-407 (LHNG…ARGG). Pro residues predominate over residues 355-367 (PRVPSPPPAPEPP). A Phosphoserine modification is found at serine 359. Positions 370-388 (CGDRGDCGDRGDVGDRGDK) are enriched in basic and acidic residues. In terms of domain architecture, RNase NYN spans 437–589 (LRHIVIDGSN…LGRNGPTLDE (153 aa)). Residues 595-633 (ARTQGSSKAQHPSRGFAEHGKQQQGREEEKGSGGIRKTR) are disordered. Positions 610–633 (FAEHGKQQQGREEEKGSGGIRKTR) are enriched in basic and acidic residues.

Belongs to the N4BP1 family.

The chain is Protein KHNYN (KHNYN) from Homo sapiens (Human).